The sequence spans 113 residues: Flagellar hook-basal body complex protein FliE (113 aa).

Belongs to the FliE family.

The protein localises to the bacterial flagellum basal body. The chain is Flagellar hook-basal body complex protein FliE from Rhizobium leguminosarum bv. trifolii (strain WSM2304).